A 636-amino-acid polypeptide reads, in one-letter code: DNA primase (636 aa).

Residues 44-68 form a CHC2-type zinc finger; it reads CPFHDEKTPSFHVRPNHGHFHCFGC. Positions 266–352 constitute a Toprim domain; it reads HQAVVVEGYT…SGQSFVAVAA (87 aa). Mg(2+) contacts are provided by Glu-272, Asp-323, and Asp-325. Positions 443-459 are enriched in basic and acidic residues; the sequence is REEAKGGGRKDNNRRGQ. The disordered stretch occupies residues 443 to 481; sequence REEAKGGGRKDNNRRGQETAARPKPPPVQRPDPTDPTLW.

It belongs to the DnaG primase family. As to quaternary structure, monomer. Interacts with DnaB. Zn(2+) serves as cofactor. It depends on Mg(2+) as a cofactor.

It carries out the reaction ssDNA + n NTP = ssDNA/pppN(pN)n-1 hybrid + (n-1) diphosphate.. RNA polymerase that catalyzes the synthesis of short RNA molecules used as primers for DNA polymerase during DNA replication. This chain is DNA primase, found in Mycolicibacterium smegmatis (strain ATCC 700084 / mc(2)155) (Mycobacterium smegmatis).